The primary structure comprises 484 residues: Falcipain-2a (484 aa).

The Cytoplasmic portion of the chain corresponds to 1-35 (MDYNMDYAPHEVISQQGERFVDKYVDRKILKNKKS). Positions 1 to 243 (MDYNMDYAPH…PLKNSKYLLD (243 aa)) are cleaved as a propeptide — activation peptide. Positions 16–25 (QGERFVDKYV) match the Bipartite vacuolar targeting signal 1 motif. A helical; Signal-anchor for type II membrane protein membrane pass occupies residues 36-56 (LLVIISLSVLSVVGFVLFYFT). At 57 to 484 (PNSRKSDLFK…GTDAFIPLIE (428 aa)) the chain is on the lumenal side. N-linked (GlcNAc...) asparagine glycosylation occurs at Asn-67. The short motif at 84–105 (KSPNGKKFIVSKIDEALSFYDS) is the Bipartite vacuolar targeting signal 2 element. The Nose motif; required for the correct folding of the mature form signature appears at 244 to 260 (QMNYEEVIKKYKGNENF). 4 disulfides stabilise this stretch: Cys-282/Cys-323, Cys-316/Cys-357, Cys-342/Cys-362, and Cys-411/Cys-472. Residue Cys-285 is part of the active site. His-417 is a catalytic residue. Positions 428–437 (EIVNPLTKKG) match the Arm motif; binds to host hemoglobin and required for the inhibitory interaction between the propeptide and the catalytic domain motif. Asn-447 is a catalytic residue.

Belongs to the peptidase C1 family. As to quaternary structure, component of the hemozoin formation complex (HFC) composed of falcipains FP2A and/or FP2B, plasmepsins PMII, PMIII/HAP and PMIV, heme detoxifying protein HDP and falcilysin FLN. The HFC complex is involved in hemoglobin degradation and detoxification of heme in the food vacuole during the asexual blood stage. In terms of processing, auto-cleaved to remove the propeptide.

It localises to the vacuole. The protein localises to the membrane. With respect to regulation, inhibited by cysteine protease inhibitor ICP. Inhibited by heme and heme analogs. Functionally, cysteine protease which cleaves native host hemoglobin and globin in the food vacuole during the asexual blood stage. The binding to host hemoglobin is pH-sensitive and only occurs at acidic pH. Cleaves ankyrin and protein 4.1, two components of host erythrocyte membrane cytoskeleton required for the stability of the erythrocyte membrane, and thus may be involved in parasite release. Preferentially cleaves substrates which have an arginine or lysine at the P1 position and a leucine or phenylalanine at the P2 position. The chain is Falcipain-2a from Plasmodium falciparum (isolate 3D7).